Here is a 271-residue protein sequence, read N- to C-terminus: Phosphatidylglycerol--prolipoprotein diacylglyceryl transferase (271 aa).

The next 7 helical transmembrane spans lie at 25–45 (WYGI…KFFV), 60–80 (YFIW…ILIY), 103–123 (FVGI…IATL), 134–154 (WIFL…GRIG), 181–201 (PSQF…VYLA), 209–229 (GELI…CEFY), and 235–255 (GIGF…IMFI). Arg-152 is a binding site for a 1,2-diacyl-sn-glycero-3-phospho-(1'-sn-glycerol).

The protein belongs to the Lgt family.

It is found in the cell inner membrane. It carries out the reaction L-cysteinyl-[prolipoprotein] + a 1,2-diacyl-sn-glycero-3-phospho-(1'-sn-glycerol) = an S-1,2-diacyl-sn-glyceryl-L-cysteinyl-[prolipoprotein] + sn-glycerol 1-phosphate + H(+). It participates in protein modification; lipoprotein biosynthesis (diacylglyceryl transfer). Functionally, catalyzes the transfer of the diacylglyceryl group from phosphatidylglycerol to the sulfhydryl group of the N-terminal cysteine of a prolipoprotein, the first step in the formation of mature lipoproteins. The chain is Phosphatidylglycerol--prolipoprotein diacylglyceryl transferase from Campylobacter jejuni subsp. doylei (strain ATCC BAA-1458 / RM4099 / 269.97).